A 376-amino-acid polypeptide reads, in one-letter code: Peroxisomal membrane protein PEX14 (376 aa).

Residues 1–12 (MASSEQAEQPNQ) show a composition bias toward polar residues. The disordered stretch occupies residues 1–24 (MASSEQAEQPNQPSSPPGSENVVP). Residue A2 is modified to N-acetylalanine. The Peroxisomal portion of the chain corresponds to 2 to 108 (ASSEQAEQPN…YSPRGSRWRD (107 aa)). Residue K34 is modified to N6-acetyllysine. The segment at 70–102 (SGTAADEPSPLGPATPVVPVQPPHLTPQPYSPR) is disordered. Residues 88–99 (PVQPPHLTPQPY) show a composition bias toward pro residues. The chain crosses the membrane as a helical span at residues 109-127 (YGALAIIMAGIAFGFHQLY). The Cytoplasmic segment spans residues 128 to 376 (KRYLLPLILG…EGASNETERD (249 aa)). The segment at 230-376 (PPSPSAPKIP…EGASNETERD (147 aa)) is disordered. Position 232 is a phosphoserine (S232). 2 stretches are compositionally biased toward low complexity: residues 247 to 259 (SSSPSSPAAVNHH) and 265 to 275 (SPVSNESTSSS). Phosphoserine occurs at positions 282 and 334. A compositionally biased stretch (acidic residues) spans 323 to 341 (KEDEDDEDDDVSHVDEEDV). Residues 359 to 376 (QVEKLRRPEGASNETERD) are compositionally biased toward basic and acidic residues.

The protein belongs to the peroxin-14 family. Interacts with PEX13; forming the PEX13-PEX14 docking complex. Interacts with PEX5 (via WxxxF/Y motifs). Interacts with PEX19. Interacts with tubulin.

It is found in the peroxisome membrane. In terms of biological role, component of the PEX13-PEX14 docking complex, a translocon channel that specifically mediates the import of peroxisomal cargo proteins bound to PEX5 receptor. The PEX13-PEX14 docking complex forms a large import pore which can be opened to a diameter of about 9 nm. Mechanistically, PEX5 receptor along with cargo proteins associates with the PEX14 subunit of the PEX13-PEX14 docking complex in the cytosol, leading to the insertion of the receptor into the organelle membrane with the concomitant translocation of the cargo into the peroxisome matrix. Plays a key role for peroxisome movement through a direct interaction with tubulin. The chain is Peroxisomal membrane protein PEX14 from Mus musculus (Mouse).